Here is a 294-residue protein sequence, read N- to C-terminus: Cell division control protein 2 homolog A (294 aa).

A Protein kinase domain is found at 4–287; it reads YEKVEKIGEG…ARNALQHEYF (284 aa). ATP-binding positions include 10–18 and K33; that span reads IGEGTYGVV. A Phosphothreonine modification is found at T14. Position 15 is a phosphotyrosine (Y15). Catalysis depends on D127, which acts as the Proton acceptor. T161 bears the Phosphothreonine; by CAK mark.

It belongs to the protein kinase superfamily. CMGC Ser/Thr protein kinase family. CDC2/CDKX subfamily.

The enzyme catalyses L-seryl-[protein] + ATP = O-phospho-L-seryl-[protein] + ADP + H(+). It carries out the reaction L-threonyl-[protein] + ATP = O-phospho-L-threonyl-[protein] + ADP + H(+). The catalysed reaction is [DNA-directed RNA polymerase] + ATP = phospho-[DNA-directed RNA polymerase] + ADP + H(+). Phosphorylation at Thr-14 or Tyr-15 inactivates the enzyme, while phosphorylation at Thr-161 activates it. Plays a key role in the control of the eukaryotic cell cycle. This is Cell division control protein 2 homolog A (CDC2A) from Antirrhinum majus (Garden snapdragon).